Consider the following 510-residue polypeptide: Probable cytochrome P450 517A2 (510 aa).

A helical transmembrane segment spans residues 1 to 21; that stretch reads MRILIIIILIIIVFLVKDTIK. Heme is bound at residue C450.

This sequence belongs to the cytochrome P450 family. Heme is required as a cofactor.

The protein resides in the membrane. In Dictyostelium discoideum (Social amoeba), this protein is Probable cytochrome P450 517A2 (cyp517A2).